The following is a 3255-amino-acid chain: Genome polyprotein (3255 aa).

Positions 292-437 (VMNQQTLTAL…HTLTHRMVQY (146 aa)) constitute a Peptidase S30 domain. Catalysis depends on for P1 proteinase activity residues histidine 345, aspartate 354, and serine 388. An Involved in interaction with stylet and aphid transmission motif is present at residues 489 to 492 (KITC). Residues 747–749 (PTK) carry the Involved in virions binding and aphid transmission motif. In terms of domain architecture, Peptidase C6 spans 773–895 (MFVAKDGYCY…ESEMQHYRVG (123 aa)). Active-site for helper component proteinase activity residues include cysteine 781 and histidine 854. The region spanning 1397-1549 (EIAHNEYRDI…PMHMVDITTE (153 aa)) is the Helicase ATP-binding domain. 1410–1417 (GGVGSGKS) contributes to the ATP binding site. Positions 1499–1502 (DECH) match the DECH box motif. In terms of domain architecture, Helicase C-terminal spans 1568–1727 (DATKKGDNIL…GLPVMTSNVS (160 aa)). A Nuclear localization signal motif is present at residues 2062 to 2069 (EKGKKSGK). Tyrosine 2084 is subject to O-(5'-phospho-RNA)-tyrosine. The Peptidase C4 domain maps to 2215–2433 (SKTLFRGLRD…MVWGGINLIN (219 aa)). Residues histidine 2260, aspartate 2295, and cysteine 2365 each act as for nuclear inclusion protein A activity in the active site. Residues 2699–2823 (WVYCDADGSQ…AIKPEYESLL (125 aa)) enclose the RdRp catalytic domain. Residues 2980–3027 (TKLDAGQGSKNDDKQKSSADSKDNVITEKGSGSGQVRKDDDINAGLHG) are disordered. Basic and acidic residues predominate over residues 2989-3005 (KNDDKQKSSADSKDNVI).

This sequence belongs to the potyviridae genome polyprotein family. In terms of assembly, interacts with host eIF4E protein (via cap-binding region); this interaction mediates the translation of the VPg-viral RNA conjugates. Part of a complex that comprises VPg, RNA, host EIF4E and EIF4G; this interaction mediates the translation of the VPg-viral RNA conjugates. Post-translationally, VPg is uridylylated by the polymerase and is covalently attached to the 5'-end of the genomic RNA. This uridylylated form acts as a nucleotide-peptide primer for the polymerase. In terms of processing, potyviral RNA is expressed as two polyproteins which undergo post-translational proteolytic processing. Genome polyprotein is processed by NIa-pro, P1 and HC-pro proteinases resulting in the production of at least ten individual proteins. P3N-PIPO polyprotein is cleaved by P1 and HC-pro proteinases resulting in the production of three individual proteins. The P1 proteinase and the HC-pro cleave only their respective C-termini autocatalytically. 6K1 is essential for proper proteolytic separation of P3 from CI.

It localises to the host cytoplasmic vesicle. Its subcellular location is the host nucleus. The protein resides in the virion. It carries out the reaction RNA(n) + a ribonucleoside 5'-triphosphate = RNA(n+1) + diphosphate. The catalysed reaction is Hydrolyzes glutaminyl bonds, and activity is further restricted by preferences for the amino acids in P6 - P1' that vary with the species of potyvirus, e.g. Glu-Xaa-Xaa-Tyr-Xaa-Gln-|-(Ser or Gly) for the enzyme from tobacco etch virus. The natural substrate is the viral polyprotein, but other proteins and oligopeptides containing the appropriate consensus sequence are also cleaved.. It catalyses the reaction Hydrolyzes a Gly-|-Gly bond at its own C-terminus, commonly in the sequence -Tyr-Xaa-Val-Gly-|-Gly, in the processing of the potyviral polyprotein.. In terms of biological role, required for aphid transmission and also has proteolytic activity. Only cleaves a Gly-Gly dipeptide at its own C-terminus. Interacts with virions and aphid stylets. Acts as a suppressor of RNA-mediated gene silencing, also known as post-transcriptional gene silencing (PTGS), a mechanism of plant viral defense that limits the accumulation of viral RNAs. May have RNA-binding activity. Functionally, has helicase activity. It may be involved in replication. Its function is as follows. Indispensable for virus replication. Mediates the cap-independent, EIF4E-dependent translation of viral genomic RNAs. Binds to the cap-binding site of host EIF4E and thus interferes with the host EIF4E-dependent mRNA export and translation. VPg-RNA directly binds EIF4E and is a template for transcription. Also forms trimeric complexes with EIF4E-EIF4G, which are templates for translation. In terms of biological role, has RNA-binding and proteolytic activities. Functionally, an RNA-dependent RNA polymerase that plays an essential role in the virus replication. Its function is as follows. Involved in aphid transmission, cell-to-cell and systemis movement, encapsidation of the viral RNA and in the regulation of viral RNA amplification. The chain is Genome polyprotein from Lettuce mosaic virus (strain E) (LMV).